The following is a 986-amino-acid chain: E3 ubiquitin-protein ligase Arkadia (986 aa).

Glycyl lysine isopeptide (Lys-Gly) (interchain with G-Cter in SUMO2) cross-links involve residues Lys19, Lys28, Lys34, Lys47, Lys59, Lys73, Lys87, Lys96, and Lys110. Over residues 66-89 the composition is skewed to basic and acidic residues; sequence HLCDDSQKQEKDMNGNQQEQEKSL. The interval 66 to 106 is disordered; it reads HLCDDSQKQEKDMNGNQQEQEKSLVVRKKRKSQQAGPSYVQ. The interval 120 to 191 is disordered; the sequence is QHLGTPSDED…HKWPRTETES (72 aa). Residues 132-151 are compositionally biased toward low complexity; it reads SSFSDCLSSPSSSLHFGDSD. Positions 164-173 are enriched in polar residues; sequence RHSQTILNAK. Lys173 participates in a covalent cross-link: Glycyl lysine isopeptide (Lys-Gly) (interchain with G-Cter in SUMO2). The span at 174–184 shows a compositional bias: basic residues; the sequence is SRSHSARSHKW. Residues Lys198 and Lys218 each participate in a glycyl lysine isopeptide (Lys-Gly) (interchain with G-Cter in SUMO2) cross-link. An interaction with AXIN1 region spans residues 241 to 404; the sequence is VLARRKYALL…VPTTSARMES (164 aa). Positions 248–277 are disordered; the sequence is ALLPSSSSSSENDLSSESSSSSSTEGEEDL. Over residues 252–271 the composition is skewed to low complexity; sequence SSSSSSENDLSSESSSSSST. The SUMO interaction motif 1 (SIM) motif lies at 300-304; sequence VVVIE. The SUMO interaction motif 2 (SIM) signature appears at 325 to 331; that stretch reads EVEIVTV. Residues 337–373 form a disordered region; it reads SRSTLGHSRSHWSQGSSSHASRPQEPRNRSRISTVIQ. The span at 347-357 shows a compositional bias: low complexity; it reads HWSQGSSSHAS. Positions 382-386 match the SUMO interaction motif 3 (SIM) motif; sequence VVDLT. Disordered regions lie at residues 389–471, 506–561, 610–646, 659–684, and 696–719; these read EDEP…ETGP, QQHG…SYHE, APSQ…RHYM, HQAS…VDYV, and ISSH…TAAP. Over residues 395–466 the composition is skewed to polar residues; sequence VPTTSARMES…DSRRTTSSAV (72 aa). A compositionally biased stretch (basic residues) spans 508–522; it reads HGHHFQHHHHHHHTP. Residues 551–561 show a composition bias toward polar residues; sequence ANSSSGTSYHE. The segment covering 670–680 has biased composition (pro residues); that stretch reads NPPPQTQPPPQ. A ubiquitin binding region spans residues 907–909; sequence YPH. Glycyl lysine isopeptide (Lys-Gly) (interchain with G-Cter in SUMO2) cross-links involve residues Lys915 and Lys919. The Zn(2+) site is built by Cys934 and Cys937. An RING-type; atypical zinc finger spans residues 934 to 975; that stretch reads CTICLSILEEGEDVRRLPCMHLFHQVCVDQWLITNKKCPICR. The segment at 949 to 953 is ubiquitin binding; that stretch reads RLPCM. Residues His957 and Cys960 each coordinate Zn(2+).

Belongs to the Arkadia family. As to quaternary structure, monomer. Interacts with SMAD6, SMAD7, AXIN1, AXIN2 and SKIL isoform SNON. Interacts with (phosphorylated) SMAD2 and SMAD3. Part of a complex containing RNF111, AXIN1 and SMAD7. Interacts (via SIM domains) with SUMO1 and SUMO2.

Its subcellular location is the nucleus. It is found in the cytoplasm. The protein resides in the PML body. The enzyme catalyses S-ubiquitinyl-[E2 ubiquitin-conjugating enzyme]-L-cysteine + [acceptor protein]-L-lysine = [E2 ubiquitin-conjugating enzyme]-L-cysteine + N(6)-ubiquitinyl-[acceptor protein]-L-lysine.. It participates in protein modification; protein ubiquitination. Binds free ubiquitin non-covalently via its RING-type zinc finger. Ubiquitin-binding leads to enhance the E3 ubiquitin-protein ligase activity by stabilizing the ubiquitin-conjugating enzyme E2 (donor ubiquitin) in the 'closed' conformation and activating ubiquitin transfer. Functionally, E3 ubiquitin-protein ligase. Required for mesoderm patterning during embryonic development. Acts as an enhancer of the transcriptional responses of the SMAD2/SMAD3 effectors, which are activated downstream of BMP. Acts by mediating ubiquitination and degradation of SMAD inhibitors such as SMAD7, inducing their proteasomal degradation and thereby enhancing the transcriptional activity of TGF-beta and BMP. In addition to enhance transcription of SMAD2/SMAD3 effectors, also regulates their turnover by mediating their ubiquitination and subsequent degradation, coupling their activation with degradation, thereby ensuring that only effectors 'in use' are degraded. Activates SMAD3/SMAD4-dependent transcription by triggering signal-induced degradation of SNON isoform of SKIL. Associates with UBE2D2 as an E2 enzyme. Specifically binds polysumoylated chains via SUMO interaction motifs (SIMs) and mediates ubiquitination of sumoylated substrates. Catalyzes 'Lys-63'-linked ubiquitination of sumoylated XPC in response to UV irradiation, promoting nucleotide excision repair. Mediates ubiquitination and degradation of sumoylated PML. The regulation of the BMP-SMAD signaling is however independent of sumoylation and is not dependent of SUMO interaction motifs (SIMs). This is E3 ubiquitin-protein ligase Arkadia (RNF111) from Pongo abelii (Sumatran orangutan).